Consider the following 256-residue polypeptide: UPF0246 protein Sbal_1048 (256 aa).

The protein belongs to the UPF0246 family.

The sequence is that of UPF0246 protein Sbal_1048 from Shewanella baltica (strain OS155 / ATCC BAA-1091).